The following is a 230-amino-acid chain: Small ribosomal subunit protein uS3 (230 aa).

The KH type-2 domain maps to 39 to 107 (VRNYLRQKLA…PVHVNIEEIR (69 aa)). A disordered region spans residues 210–230 (SSKPEHESKQRKAGRRNAAAN).

The protein belongs to the universal ribosomal protein uS3 family. Part of the 30S ribosomal subunit. Forms a tight complex with proteins S10 and S14.

Binds the lower part of the 30S subunit head. Binds mRNA in the 70S ribosome, positioning it for translation. In Neisseria meningitidis serogroup C (strain 053442), this protein is Small ribosomal subunit protein uS3.